The following is a 153-amino-acid chain: Pheromone-binding protein Gp-9 (153 aa).

The N-terminal stretch at 1 to 19 (MKTFVLHIFIFAFVAFASA) is a signal peptide. 3 cysteine pairs are disulfide-bonded: C37/C77, C73/C129, and C118/C138.

Belongs to the PBP/GOBP family. As to quaternary structure, homodimer.

Its subcellular location is the secreted. In terms of biological role, colony queen number, a major feature of social organization, is associated with worker genotype for Gp-9. Colonies are headed by either a single reproductive queen (monogyne form) or multiple queens (polygyne form). Differences in worker Gp-9 genotypes between social forms may cause differences in workers' abilities to recognize queens and regulate their numbers. The chain is Pheromone-binding protein Gp-9 from Solenopsis geminata (Tropical fire ant).